The sequence spans 351 residues: Fe(3+) ions import ATP-binding protein FbpC (351 aa).

The ABC transporter domain maps to 9 to 239 (LVLKNINKTF…PNSLFLANFM (231 aa)). Residue 41–48 (GPSGCGKT) participates in ATP binding.

This sequence belongs to the ABC transporter superfamily. Fe(3+) ion importer (TC 3.A.1.10) family. The complex is composed of two ATP-binding proteins (FbpC), two transmembrane proteins (FbpB) and a solute-binding protein (FbpA).

The protein localises to the cell inner membrane. It carries out the reaction Fe(3+)(out) + ATP + H2O = Fe(3+)(in) + ADP + phosphate + H(+). Part of the ABC transporter complex FbpABC involved in Fe(3+) ions import. Responsible for energy coupling to the transport system. The polypeptide is Fe(3+) ions import ATP-binding protein FbpC (Mannheimia succiniciproducens (strain KCTC 0769BP / MBEL55E)).